Here is a 268-residue protein sequence, read N- to C-terminus: Glucosamine-6-phosphate deaminase (268 aa).

Residue Asp72 is the Proton acceptor; for enolization step of the active site. Asp141 (for ring-opening step) is an active-site residue. Catalysis depends on His143, which acts as the Proton acceptor; for ring-opening step. Glu148 acts as the For ring-opening step in catalysis.

Belongs to the glucosamine/galactosamine-6-phosphate isomerase family. NagB subfamily. Homohexamer.

The catalysed reaction is alpha-D-glucosamine 6-phosphate + H2O = beta-D-fructose 6-phosphate + NH4(+). Its pathway is amino-sugar metabolism; N-acetylneuraminate degradation; D-fructose 6-phosphate from N-acetylneuraminate: step 5/5. Allosterically activated by N-acetylglucosamine 6-phosphate (GlcNAc6P). Its function is as follows. Catalyzes the reversible isomerization-deamination of glucosamine 6-phosphate (GlcN6P) to form fructose 6-phosphate (Fru6P) and ammonium ion. The protein is Glucosamine-6-phosphate deaminase of Proteus mirabilis (strain HI4320).